A 440-amino-acid polypeptide reads, in one-letter code: Protein eva-1 homolog C (440 aa).

The span at 1–13 (MLLPGHPRPPPAP) shows a compositional bias: pro residues. Residues 1 to 23 (MLLPGHPRPPPAPQSAQNQGLRR) form a disordered region. Residues 1–48 (MLLPGHPRPPPAPQSAQNQGLRRQVEPPGQLLRLFYCTVLVCSKETSA) form the signal peptide. Residues 49–321 (LTDFSGYLTK…AYIRAHPERA (273 aa)) lie on the Extracellular side of the membrane. N-linked (GlcNAc...) asparagine glycans are attached at residues asparagine 62, asparagine 109, and asparagine 165. In terms of domain architecture, SUEL-type lectin 1 spans 67-159 (ACDGDYLNLQ…KYLLVSFKCQ (93 aa)). Residues 168 to 260 (VCENQELKLH…KYLTVAYACV (93 aa)) form the SUEL-type lectin 2 domain. Residues 322–342 (ALLFMSSVCIGLLLTLCALVI) form a helical membrane-spanning segment. At 343–440 (RVSCTKDFRE…SLPRNVGHFY (98 aa)) the chain is on the cytoplasmic side. The segment at 364 to 384 (SDKAEEDSEEDLEEEDSSDSQ) is disordered. The span at 367–381 (AEEDSEEDLEEEDSS) shows a compositional bias: acidic residues.

This sequence belongs to the EVA1 family. As to expression, ubiquitous.

It localises to the cell membrane. Functionally, binds heparin. This is Protein eva-1 homolog C (Eva1c) from Mus musculus (Mouse).